A 1282-amino-acid chain; its full sequence is Trafficking protein particle complex subunit 8 (1282 aa).

The segment at Thr-245–Pro-287 is disordered. Low complexity predominate over residues Ala-255–Ser-273.

Its function is as follows. Plays a role in endoplasmic reticulum to Golgi apparatus trafficking at a very early stage. Involved in collagen secretion. In Caenorhabditis elegans, this protein is Trafficking protein particle complex subunit 8.